A 237-amino-acid chain; its full sequence is Phosphoribosylaminoimidazole-succinocarboxamide synthase (237 aa).

The protein belongs to the SAICAR synthetase family.

The enzyme catalyses 5-amino-1-(5-phospho-D-ribosyl)imidazole-4-carboxylate + L-aspartate + ATP = (2S)-2-[5-amino-1-(5-phospho-beta-D-ribosyl)imidazole-4-carboxamido]succinate + ADP + phosphate + 2 H(+). It functions in the pathway purine metabolism; IMP biosynthesis via de novo pathway; 5-amino-1-(5-phospho-D-ribosyl)imidazole-4-carboxamide from 5-amino-1-(5-phospho-D-ribosyl)imidazole-4-carboxylate: step 1/2. This is Phosphoribosylaminoimidazole-succinocarboxamide synthase from Salmonella arizonae (strain ATCC BAA-731 / CDC346-86 / RSK2980).